Consider the following 125-residue polypeptide: MSNIESIVEKLSSLTLLQAAELSKRLEEEWGVSAAAPVAVVASAAGESAAAVAEKTEFEVFLEGFDAKKKISVIKEVRAITELGLKEAKDFVESAPKSLKTGVSKDEAEELKKKLEAAGATIILR.

The protein belongs to the bacterial ribosomal protein bL12 family. In terms of assembly, homodimer. Part of the ribosomal stalk of the 50S ribosomal subunit. Forms a multimeric L10(L12)X complex, where L10 forms an elongated spine to which 2 to 4 L12 dimers bind in a sequential fashion. Binds GTP-bound translation factors.

In terms of biological role, forms part of the ribosomal stalk which helps the ribosome interact with GTP-bound translation factors. Is thus essential for accurate translation. The protein is Large ribosomal subunit protein bL12 of Liberibacter africanus (Citrus greening disease).